The following is a 160-amino-acid chain: Cytochrome b6-f complex subunit 4 (160 aa).

3 consecutive transmembrane segments (helical) span residues 36–56, 95–115, and 127–147; these read LLYT…GLAV, LLGI…PFIE, and PIAM…GVAA.

Belongs to the cytochrome b family. PetD subfamily. The 4 large subunits of the cytochrome b6-f complex are cytochrome b6, subunit IV (17 kDa polypeptide, PetD), cytochrome f and the Rieske protein, while the 4 small subunits are PetG, PetL, PetM and PetN. The complex functions as a dimer.

The protein localises to the cellular thylakoid membrane. Component of the cytochrome b6-f complex, which mediates electron transfer between photosystem II (PSII) and photosystem I (PSI), cyclic electron flow around PSI, and state transitions. The sequence is that of Cytochrome b6-f complex subunit 4 from Prochlorothrix hollandica.